A 102-amino-acid chain; its full sequence is Co-chaperonin GroES (102 aa).

Belongs to the GroES chaperonin family. As to quaternary structure, heptamer of 7 subunits arranged in a ring. Interacts with the chaperonin GroEL.

The protein resides in the cytoplasm. In terms of biological role, together with the chaperonin GroEL, plays an essential role in assisting protein folding. The GroEL-GroES system forms a nano-cage that allows encapsulation of the non-native substrate proteins and provides a physical environment optimized to promote and accelerate protein folding. GroES binds to the apical surface of the GroEL ring, thereby capping the opening of the GroEL channel. This is Co-chaperonin GroES from Chlamydia trachomatis serovar L2 (strain ATCC VR-902B / DSM 19102 / 434/Bu).